A 770-amino-acid polypeptide reads, in one-letter code: Metallothionein expression activator (770 aa).

The disordered stretch occupies residues 77-97 (LVPSPKTGDGSSDKKNIDRTW). Phosphoserine occurs at positions 80, 122, 247, 249, and 253. Position 259 is a phosphothreonine (Thr259). Positions 286-323 (PPPTLISPRMSNTSINGSPSRKYHRQRYPNKSPESNGL) are disordered. The span at 294–304 (RMSNTSINGSP) shows a compositional bias: polar residues. 3 positions are modified to phosphoserine: Ser385, Ser392, and Ser483. Thr486 and Thr501 each carry phosphothreonine. Ser564 is modified (phosphoserine). C2H2-type zinc fingers lie at residues 603–627 (FECLYPNCNKVFKRRYNIRSHIQTH) and 633–657 (YSCDFPGCTKAFVRNHDLIRHKISH). The C2H2-type 3; atypical zinc finger occupies 662-685 (YICPCGKRFNREDALMVHRSRMIC). The disordered stretch occupies residues 699 to 770 (LTSPKKSLLD…RTLSNETDAL (72 aa)). Positions 705-745 (SLLDSPHDTSPVKETIARDKDGSVLMKMEEQLRDDMRKHGL) are enriched in basic and acidic residues. Residues Ser709 and Ser714 each carry the phosphoserine modification. A compositionally biased stretch (polar residues) spans 754–770 (AHEQNSNRTLSNETDAL).

The protein localises to the nucleus. In terms of biological role, plays a role in regulating basal-level expression of CUP1. Activates EGT2 transcription in the absence of SWI5. This Saccharomyces cerevisiae (strain ATCC 204508 / S288c) (Baker's yeast) protein is Metallothionein expression activator (ACE2).